The chain runs to 94 residues: Aspartyl/glutamyl-tRNA(Asn/Gln) amidotransferase subunit C (94 aa).

Belongs to the GatC family. In terms of assembly, heterotrimer of A, B and C subunits.

It catalyses the reaction L-glutamyl-tRNA(Gln) + L-glutamine + ATP + H2O = L-glutaminyl-tRNA(Gln) + L-glutamate + ADP + phosphate + H(+). The catalysed reaction is L-aspartyl-tRNA(Asn) + L-glutamine + ATP + H2O = L-asparaginyl-tRNA(Asn) + L-glutamate + ADP + phosphate + 2 H(+). Its function is as follows. Allows the formation of correctly charged Asn-tRNA(Asn) or Gln-tRNA(Gln) through the transamidation of misacylated Asp-tRNA(Asn) or Glu-tRNA(Gln) in organisms which lack either or both of asparaginyl-tRNA or glutaminyl-tRNA synthetases. The reaction takes place in the presence of glutamine and ATP through an activated phospho-Asp-tRNA(Asn) or phospho-Glu-tRNA(Gln). The chain is Aspartyl/glutamyl-tRNA(Asn/Gln) amidotransferase subunit C from Syntrophomonas wolfei subsp. wolfei (strain DSM 2245B / Goettingen).